A 523-amino-acid polypeptide reads, in one-letter code: Pentatricopeptide repeat-containing protein At1g64580 (523 aa).

PPR repeat units lie at residues 43 to 77, 78 to 112, 113 to 147, 148 to 182, 183 to 217, 218 to 252, 253 to 287, 288 to 322, 323 to 357, 358 to 392, 393 to 427, 428 to 462, and 463 to 497; these read HHHHYRERLRNELHCIKFDDAFSLFCEMLQSRPIP, SIVDFTRVLTVIAKMNKFDIVIYLYHKMENLGISH, DLYSFTILIHCFCRCSRLSLALALLGKMMKLGFRP, SIVTLGSLLNGFCQGNRFQEAVSLVDSMDGFGFVP, NVVIYNTVINGLCKNRDLNNALEVFYCMEKKGIRA, DAVTYNTLISGLSNSGRWTDAARLLRDMVKRKIDP, NVIFFTALIDTFVKEGNLLEARNLYKEMIRRSVVP, NVFTYNSLINGFCIHGCLGDAKYMFDLMVSKGCFP, DVVTYNTLITGFCKSKRVEDGMKLFCEMTYQGLVG, DAFTYNTLIHGYCQAGKLNVAQKVFNRMVDCGVSP, DIVTYNILLDCLCNNGKIEKALVMVEDLQKSEMDV, DIITYNIIIQGLCRTDKLKEAWCLFRSLTRKGVKP, and DAIAYITMISGLCRKGLQREADKLCRRMKEDGFMP.

The protein belongs to the PPR family. P subfamily.

The chain is Pentatricopeptide repeat-containing protein At1g64580 from Arabidopsis thaliana (Mouse-ear cress).